The primary structure comprises 142 residues: Large ribosomal subunit protein uL11 (142 aa).

The protein belongs to the universal ribosomal protein uL11 family. In terms of assembly, part of the ribosomal stalk of the 50S ribosomal subunit. Interacts with L10 and the large rRNA to form the base of the stalk. L10 forms an elongated spine to which L12 dimers bind in a sequential fashion forming a multimeric L10(L12)X complex. One or more lysine residues are methylated.

Its function is as follows. Forms part of the ribosomal stalk which helps the ribosome interact with GTP-bound translation factors. The chain is Large ribosomal subunit protein uL11 from Rhizobium meliloti (strain 1021) (Ensifer meliloti).